Reading from the N-terminus, the 202-residue chain is Small ribosomal subunit protein uS4 (202 aa).

Residues 17 to 42 are disordered; it reads ELPGLSRKTPRRAYPPGQHGQARKKR. In terms of domain architecture, S4 RNA-binding spans 90–152; that stretch reads MRLDNTIFRL…DASRKLIETH (63 aa).

The protein belongs to the universal ribosomal protein uS4 family. In terms of assembly, part of the 30S ribosomal subunit. Contacts protein S5. The interaction surface between S4 and S5 is involved in control of translational fidelity.

One of the primary rRNA binding proteins, it binds directly to 16S rRNA where it nucleates assembly of the body of the 30S subunit. Functionally, with S5 and S12 plays an important role in translational accuracy. This is Small ribosomal subunit protein uS4 from Acaryochloris marina (strain MBIC 11017).